The primary structure comprises 272 residues: Dermonecrotic toxin SpeSicTox-betaIB1b (272 aa).

Residue His5 is part of the active site. Mg(2+) is bound by residues Glu25 and Asp27. His41 serves as the catalytic Nucleophile. Disulfide bonds link Cys45-Cys51 and Cys47-Cys191. A Mg(2+)-binding site is contributed by Asp85.

The protein belongs to the arthropod phospholipase D family. Class II subfamily. Mg(2+) serves as cofactor. In terms of tissue distribution, expressed by the venom gland.

It localises to the secreted. It catalyses the reaction an N-(acyl)-sphingosylphosphocholine = an N-(acyl)-sphingosyl-1,3-cyclic phosphate + choline. The enzyme catalyses an N-(acyl)-sphingosylphosphoethanolamine = an N-(acyl)-sphingosyl-1,3-cyclic phosphate + ethanolamine. It carries out the reaction a 1-acyl-sn-glycero-3-phosphocholine = a 1-acyl-sn-glycero-2,3-cyclic phosphate + choline. The catalysed reaction is a 1-acyl-sn-glycero-3-phosphoethanolamine = a 1-acyl-sn-glycero-2,3-cyclic phosphate + ethanolamine. In terms of biological role, dermonecrotic toxins cleave the phosphodiester linkage between the phosphate and headgroup of certain phospholipids (sphingolipid and lysolipid substrates), forming an alcohol (often choline) and a cyclic phosphate. This toxin acts on sphingomyelin (SM). It may also act on ceramide phosphoethanolamine (CPE), lysophosphatidylcholine (LPC) and lysophosphatidylethanolamine (LPE), but not on lysophosphatidylserine (LPS), and lysophosphatidylglycerol (LPG). It acts by transphosphatidylation, releasing exclusively cyclic phosphate products as second products. Induces dermonecrosis, hemolysis, increased vascular permeability, edema, inflammatory response, and platelet aggregation. This is Dermonecrotic toxin SpeSicTox-betaIB1b from Sicarius peruensis (Six-eyed sand spider).